Consider the following 458-residue polypeptide: Chromosomal replication initiator protein DnaA (458 aa).

Residues 1 to 79 (MSLAIWQECL…ENPNHSVKIR (79 aa)) are domain I, interacts with DnaA modulators. The domain II stretch occupies residues 79-120 (RLMVGNVSSVEKKPAKQIPTQAPLTNQPWEGESKAHRVPHKS). The segment at 92-114 (PAKQIPTQAPLTNQPWEGESKAH) is disordered. Residues 96–106 (IPTQAPLTNQP) show a composition bias toward polar residues. The domain III, AAA+ region stretch occupies residues 121–338 (NLIKKYTFDN…GAIANISAKA (218 aa)). 4 residues coordinate ATP: G165, G167, K168, and T169. A domain IV, binds dsDNA region spans residues 339–458 (QFTGQGITIS…YKILIRTLSM (120 aa)).

This sequence belongs to the DnaA family. Oligomerizes as a right-handed, spiral filament on DNA at oriC.

It is found in the cytoplasm. Its function is as follows. Plays an essential role in the initiation and regulation of chromosomal replication. ATP-DnaA binds to the origin of replication (oriC) to initiate formation of the DNA replication initiation complex once per cell cycle. Binds the DnaA box (a 9 base pair repeat at the origin) and separates the double-stranded (ds)DNA. Forms a right-handed helical filament on oriC DNA; dsDNA binds to the exterior of the filament while single-stranded (ss)DNA is stabiized in the filament's interior. The ATP-DnaA-oriC complex binds and stabilizes one strand of the AT-rich DNA unwinding element (DUE), permitting loading of DNA polymerase. After initiation quickly degrades to an ADP-DnaA complex that is not apt for DNA replication. Binds acidic phospholipids. This Psychromonas ingrahamii (strain DSM 17664 / CCUG 51855 / 37) protein is Chromosomal replication initiator protein DnaA.